A 107-amino-acid polypeptide reads, in one-letter code: Phosphoribosyl-ATP pyrophosphatase (107 aa).

This sequence belongs to the PRA-PH family.

The protein resides in the cytoplasm. It catalyses the reaction 1-(5-phospho-beta-D-ribosyl)-ATP + H2O = 1-(5-phospho-beta-D-ribosyl)-5'-AMP + diphosphate + H(+). It participates in amino-acid biosynthesis; L-histidine biosynthesis; L-histidine from 5-phospho-alpha-D-ribose 1-diphosphate: step 2/9. The chain is Phosphoribosyl-ATP pyrophosphatase from Methylobacterium radiotolerans (strain ATCC 27329 / DSM 1819 / JCM 2831 / NBRC 15690 / NCIMB 10815 / 0-1).